The chain runs to 295 residues: Ribosomal protein L11 methyltransferase (295 aa).

S-adenosyl-L-methionine is bound by residues threonine 145, glycine 166, aspartate 188, and asparagine 230.

It belongs to the methyltransferase superfamily. PrmA family.

The protein resides in the cytoplasm. The catalysed reaction is L-lysyl-[protein] + 3 S-adenosyl-L-methionine = N(6),N(6),N(6)-trimethyl-L-lysyl-[protein] + 3 S-adenosyl-L-homocysteine + 3 H(+). Its function is as follows. Methylates ribosomal protein L11. This chain is Ribosomal protein L11 methyltransferase, found in Shewanella amazonensis (strain ATCC BAA-1098 / SB2B).